The primary structure comprises 786 residues: Ribosome biogenesis protein BOP1 homolog (786 aa).

Over residues 1 to 11 (MTKKLTIKRKV) the composition is skewed to basic residues. The disordered stretch occupies residues 1–161 (MTKKLTIKRK…DSDTSDEEDI (161 aa)). 4 stretches are compositionally biased toward acidic residues: residues 28–37 (DNEEEEEEDL), 46–55 (EDSTDDEGID), 62–74 (SSEDLEFESDEEG), and 86–103 (SGDDDEESAEDEEEEDDA). Over residues 104 to 113 (DAKKSSKNND) the composition is skewed to basic and acidic residues. Positions 151–160 (ADSDTSDEED) are enriched in acidic residues. 7 WD repeats span residues 447–488 (GHTD…RTIE), 490–528 (EDVVRCVAWCPNAKLSIIAVATGSRLLLVNPKVGDKLLV), 572–614 (THFK…SQIP), 617–655 (KSKGLIQCVLFHPVKPCFFVATQHNIRIYDLVKQELIKK), 658–697 (TNSKWISGMSIHPKGDNLLVSTYDKKMLWFDLDLSTKPYQ), 701–740 (LHRNAVRSVAFHLRYPLFASGSDDQAVIVSHGMVYNDLLQ), and 756–786 (REEFGVLDVNWHPVQPWVFSTGADCTIRLFT).

Belongs to the WD repeat BOP1/ERB1 family.

The protein localises to the nucleus. It localises to the nucleolus. It is found in the nucleoplasm. Functionally, required for maturation of ribosomal RNAs and formation of the large ribosomal subunit. The protein is Ribosome biogenesis protein BOP1 homolog of Drosophila pseudoobscura pseudoobscura (Fruit fly).